A 430-amino-acid chain; its full sequence is Probable aspartic-type endopeptidase ARB_07403 (430 aa).

A signal peptide spans 1–17; that stretch reads MHVSTLLVAVLLPLALS. Residues 18 to 87 constitute a propeptide, activation peptide; the sequence is KPTPRKKTGS…SKATAGSGKE (70 aa). A disordered region spans residues 66–105; sequence YHPQHISKLPGNSKATAGSGKEGVESQDEKGEVVNNPTNH. The segment covering 87-97 has biased composition (basic and acidic residues); it reads EGVESQDEKGE. The Peptidase A1 domain occupies 109 to 427; that stretch reads FLSPVTIGGQ…DQRGPSISLA (319 aa). Asp-125 is an active-site residue. N-linked (GlcNAc...) asparagine glycosylation occurs at Asn-306. Asp-314 is a catalytic residue.

Belongs to the peptidase A1 family.

The protein localises to the secreted. Functionally, probable secreted aspartic-type endopeptidase which contributes to virulence. The sequence is that of Probable aspartic-type endopeptidase ARB_07403 from Arthroderma benhamiae (strain ATCC MYA-4681 / CBS 112371) (Trichophyton mentagrophytes).